The chain runs to 435 residues: MDTIFAVSSGLLPSGVAVIRLSGSHVVHVVTTLCGCLPKARFMHYGNLTARDGSFLDSALTVFFPAPHSFTGEDCAEFHLHGGKAVVNRFLDELSTFKGCRIAEPGEFSRRAFMEGKLDLVQAEGLADLIEAETESQRRLAVMGTSGRLTTLYRDWRHKLMKIRAFIEAELDFSDEADIPNTVSDKVWKDVENLCISLREHIAEGERASILRDGFKIVIVGAPNSGKSSIMNRLAGKPVAIVTEEAGTTRDALEVRLVLGGLPVFLIDTAGFRETDNKIEQLGIEVAKQHVRDADLVILVYDMQNPKEVYLPETSAEIWRVGNKFDLYEENKEPWLIQFSALTGLNFDHFMKELESFCLRRVSEIGNLFPARKRQLQLLKEAVKEIENSVNYDSLDLSLRAEHLRRASDFLGKITGDIDVEDLLDIIFSEFCIGK.

The (6S)-5-formyl-5,6,7,8-tetrahydrofolate site is built by Arg20, Glu77, and Lys117. The TrmE-type G domain occupies 214–359; sequence GFKIVIVGAP…FMKELESFCL (146 aa). GTP-binding positions include 224–229, 243–249, and 268–271; these read NSGKSS, TEEAGTT, and DTAG. Residues Ser228 and Thr249 each coordinate Mg(2+). A (6S)-5-formyl-5,6,7,8-tetrahydrofolate-binding site is contributed by Lys435.

It belongs to the TRAFAC class TrmE-Era-EngA-EngB-Septin-like GTPase superfamily. TrmE GTPase family. As to quaternary structure, homodimer. Heterotetramer of two MnmE and two MnmG subunits. The cofactor is K(+).

The protein resides in the cytoplasm. Functionally, exhibits a very high intrinsic GTPase hydrolysis rate. Involved in the addition of a carboxymethylaminomethyl (cmnm) group at the wobble position (U34) of certain tRNAs, forming tRNA-cmnm(5)s(2)U34. The sequence is that of tRNA modification GTPase MnmE from Bartonella henselae (strain ATCC 49882 / DSM 28221 / CCUG 30454 / Houston 1) (Rochalimaea henselae).